Here is a 441-residue protein sequence, read N- to C-terminus: CBL-interacting serine/threonine-protein kinase 3 (441 aa).

Positions 14–269 (YEVGRTIGEG…PQEVFEDEWF (256 aa)) constitute a Protein kinase domain. Residues 20 to 28 (IGEGTFAKV) and Lys43 contribute to the ATP site. The active-site Proton acceptor is the Asp137. The tract at residues 155–184 (DFGLSALSQQVRDDGLLHTSCGTPNYVAPE) is activation loop. Positions 307–331 (EQPAAINAFEIISMSRGLNLENLFD) constitute an NAF domain. Residues 337 to 366 (KRETRITLRGGANEIIEKIEEAAKPLGFDV) form a PPI region.

Belongs to the protein kinase superfamily. CAMK Ser/Thr protein kinase family. SNF1 subfamily. In terms of assembly, interacts with CBL3 and CBL9. Mn(2+) is required as a cofactor. Mostly expressed in germinating seeds and young seedlings. Detected at low levels in roots, stems, leaves and flowers.

It carries out the reaction L-seryl-[protein] + ATP = O-phospho-L-seryl-[protein] + ADP + H(+). The catalysed reaction is L-threonyl-[protein] + ATP = O-phospho-L-threonyl-[protein] + ADP + H(+). Its function is as follows. Involved in the resistance to some abiotic stresses (e.g. high salt, hyperosmotic stress) in young seedlings, by regulating the expression of several stress-inducible genes (cold- and salt-induced genes but not drought-responsive genes). Required for the ABA response during germination. CIPK serine-threonine protein kinases interact with CBL proteins. Binding of a CBL protein to the regulatory NAF domain of CIPK protein lead to the activation of the kinase in a calcium-dependent manner. The CBL9/CIPK3 complex acts in the regulation of abscisic acid response in seed germination. In Arabidopsis thaliana (Mouse-ear cress), this protein is CBL-interacting serine/threonine-protein kinase 3 (CIPK3).